The sequence spans 245 residues: Probable phosphatase YcdX (245 aa).

9 residues coordinate Zn(2+): H7, H9, H15, H40, E73, H101, H131, D192, and H194.

It belongs to the PHP family. As to quaternary structure, homotrimer. It depends on Zn(2+) as a cofactor.

This is Probable phosphatase YcdX from Salmonella heidelberg (strain SL476).